Here is a 481-residue protein sequence, read N- to C-terminus: DNA primase DnaG (481 aa).

The Toprim domain occupies 169–243; that stretch reads DAILVVEGRA…DVDYVARAPD (75 aa). Mg(2+) contacts are provided by E175, D217, and D219. The disordered stretch occupies residues 275-393; that stretch reads RRRNKLAAQA…ARKEREPSEF (119 aa). The span at 281-309 shows a compositional bias: low complexity; it reads AAQAAEKQAQAEAAQKAEAPAAAAPVQPQ. The segment covering 312-393 has biased composition (basic and acidic residues); sequence YQQKEYPQRE…ARKEREPSEF (82 aa).

It belongs to the archaeal DnaG primase family. Forms a ternary complex with MCM helicase and DNA. Component of the archaeal exosome complex. Mg(2+) is required as a cofactor.

The enzyme catalyses ssDNA + n NTP = ssDNA/pppN(pN)n-1 hybrid + (n-1) diphosphate.. Functionally, RNA polymerase that catalyzes the synthesis of short RNA molecules used as primers for DNA polymerase during DNA replication. Also part of the exosome, which is a complex involved in RNA degradation. Acts as a poly(A)-binding protein that enhances the interaction between heteromeric, adenine-rich transcripts and the exosome. This is DNA primase DnaG from Methanocella arvoryzae (strain DSM 22066 / NBRC 105507 / MRE50).